A 62-amino-acid polypeptide reads, in one-letter code: Frontoxin III (62 aa).

Intrachain disulfides connect cysteine 3–cysteine 24, cysteine 17–cysteine 41, cysteine 43–cysteine 54, and cysteine 55–cysteine 60.

As to expression, expressed by the venom gland.

It localises to the secreted. In terms of biological role, binds to muscle nicotinic acetylcholine receptor (nAChR) and inhibit acetylcholine from binding to the receptor, thereby impairing neuromuscular transmission. This Micrurus frontalis (Coral snake) protein is Frontoxin III.